The sequence spans 198 residues: UPF0215 protein NEQ431 (198 aa).

The interval 179-198 (TKGDSSKPRAGGDSNPGPAG) is disordered.

Belongs to the UPF0215 family.

This is UPF0215 protein NEQ431 from Nanoarchaeum equitans (strain Kin4-M).